A 509-amino-acid polypeptide reads, in one-letter code: Light-independent protochlorophyllide reductase subunit B (509 aa).

Residue D36 coordinates [4Fe-4S] cluster. The Proton donor role is filled by D298. 433 to 434 is a binding site for substrate; that stretch reads GM.

It belongs to the ChlB/BchB/BchZ family. As to quaternary structure, protochlorophyllide reductase is composed of three subunits; ChlL, ChlN and ChlB. Forms a heterotetramer of two ChlB and two ChlN subunits. The cofactor is [4Fe-4S] cluster.

The protein resides in the plastid. Its subcellular location is the chloroplast. The catalysed reaction is chlorophyllide a + oxidized 2[4Fe-4S]-[ferredoxin] + 2 ADP + 2 phosphate = protochlorophyllide a + reduced 2[4Fe-4S]-[ferredoxin] + 2 ATP + 2 H2O. The protein operates within porphyrin-containing compound metabolism; chlorophyll biosynthesis (light-independent). In terms of biological role, component of the dark-operative protochlorophyllide reductase (DPOR) that uses Mg-ATP and reduced ferredoxin to reduce ring D of protochlorophyllide (Pchlide) to form chlorophyllide a (Chlide). This reaction is light-independent. The NB-protein (ChlN-ChlB) is the catalytic component of the complex. The polypeptide is Light-independent protochlorophyllide reductase subunit B (Ephedra altissima (High-climbing jointfir)).